We begin with the raw amino-acid sequence, 459 residues long: Cysteine--tRNA ligase (459 aa).

Zn(2+) is bound at residue Cys-31. A 'HIGH' region motif is present at residues 33–43 (PTVYDNPHIGN). Cys-216, His-241, and Glu-245 together coordinate Zn(2+). The 'KMSKS' region signature appears at 274-278 (KMSKS). Lys-277 provides a ligand contact to ATP.

It belongs to the class-I aminoacyl-tRNA synthetase family. In terms of assembly, monomer. It depends on Zn(2+) as a cofactor.

Its subcellular location is the cytoplasm. The catalysed reaction is tRNA(Cys) + L-cysteine + ATP = L-cysteinyl-tRNA(Cys) + AMP + diphosphate. This chain is Cysteine--tRNA ligase, found in Rickettsia canadensis (strain McKiel).